The following is a 612-amino-acid chain: Methionine--tRNA ligase (612 aa).

A 'HIGH' region motif is present at residues 12–22 (PYANGPRHIGH). Zn(2+)-binding residues include Cys144, Cys147, Cys157, and Cys160. The 'KMSKS' region motif lies at 350 to 354 (KFSSS). Residue Ser353 coordinates ATP. The interval 580–612 (IQPGTQLSKPKPLFPKLDPELAETGPEWAPVQK) is disordered.

It belongs to the class-I aminoacyl-tRNA synthetase family. MetG type 1 subfamily. In terms of assembly, monomer. The cofactor is Zn(2+).

It localises to the cytoplasm. The catalysed reaction is tRNA(Met) + L-methionine + ATP = L-methionyl-tRNA(Met) + AMP + diphosphate. In terms of biological role, is required not only for elongation of protein synthesis but also for the initiation of all mRNA translation through initiator tRNA(fMet) aminoacylation. This chain is Methionine--tRNA ligase, found in Corynebacterium jeikeium (strain K411).